A 236-amino-acid polypeptide reads, in one-letter code: 2-C-methyl-D-erythritol 4-phosphate cytidylyltransferase (236 aa).

Belongs to the IspD/TarI cytidylyltransferase family. IspD subfamily.

The catalysed reaction is 2-C-methyl-D-erythritol 4-phosphate + CTP + H(+) = 4-CDP-2-C-methyl-D-erythritol + diphosphate. Its pathway is isoprenoid biosynthesis; isopentenyl diphosphate biosynthesis via DXP pathway; isopentenyl diphosphate from 1-deoxy-D-xylulose 5-phosphate: step 2/6. In terms of biological role, catalyzes the formation of 4-diphosphocytidyl-2-C-methyl-D-erythritol from CTP and 2-C-methyl-D-erythritol 4-phosphate (MEP). In Pseudomonas syringae pv. tomato (strain ATCC BAA-871 / DC3000), this protein is 2-C-methyl-D-erythritol 4-phosphate cytidylyltransferase.